A 660-amino-acid chain; its full sequence is UvrABC system protein C (660 aa).

A GIY-YIG domain is found at 16 to 95 (ESPGVYRFRD…IKQYDPRFNV (80 aa)). A UVR domain is found at 208–243 (DAMVRRLEREMAEASAELEFERAARLRDDLAALRRA). A disordered region spans residues 469–501 (GEAGVESAGDPDAPAGPDAPDEPRVGTLVDPTT). Residues 476-486 (AGDPDAPAGPD) are compositionally biased toward low complexity.

It belongs to the UvrC family. In terms of assembly, interacts with UvrB in an incision complex.

The protein localises to the cytoplasm. The UvrABC repair system catalyzes the recognition and processing of DNA lesions. UvrC both incises the 5' and 3' sides of the lesion. The N-terminal half is responsible for the 3' incision and the C-terminal half is responsible for the 5' incision. The polypeptide is UvrABC system protein C (Salinispora arenicola (strain CNS-205)).